The following is a 401-amino-acid chain: Ufm1-specific protease 2 (401 aa).

Active-site residues include Cys-234, Asp-358, and His-360.

It belongs to the peptidase C78 family.

It localises to the endoplasmic reticulum. The protein resides in the cytoplasm. Its subcellular location is the nucleus. In terms of biological role, thiol-dependent isopeptidase that specifically cleaves UFM1, a ubiquitin-like modifier protein, from conjugated proteins. While it is also able to mediate the processing of UFM1 precursors, a prerequisite for conjugation reactions, ufsp2 mainly acts as a protein deUFMylase that mediates deconjugation of UFM1 from target proteins. The sequence is that of Ufm1-specific protease 2 from Danio rerio (Zebrafish).